The following is a 362-amino-acid chain: Peptide chain release factor 1 (362 aa).

Q237 is subject to N5-methylglutamine.

The protein belongs to the prokaryotic/mitochondrial release factor family. Post-translationally, methylated by PrmC. Methylation increases the termination efficiency of RF1.

It localises to the cytoplasm. Functionally, peptide chain release factor 1 directs the termination of translation in response to the peptide chain termination codons UAG and UAA. The polypeptide is Peptide chain release factor 1 (Marinomonas sp. (strain MWYL1)).